The sequence spans 151 residues: Arginine repressor (151 aa).

This sequence belongs to the ArgR family.

The protein resides in the cytoplasm. Its pathway is amino-acid biosynthesis; L-arginine biosynthesis [regulation]. Functionally, regulates arginine biosynthesis genes. The polypeptide is Arginine repressor (Pelotomaculum thermopropionicum (strain DSM 13744 / JCM 10971 / SI)).